The following is a 479-amino-acid chain: ATP synthase subunit beta (479 aa).

168-175 provides a ligand contact to ATP; that stretch reads GGAGVGKT.

This sequence belongs to the ATPase alpha/beta chains family. As to quaternary structure, F-type ATPases have 2 components, CF(1) - the catalytic core - and CF(0) - the membrane proton channel. CF(1) has five subunits: alpha(3), beta(3), gamma(1), delta(1), epsilon(1). CF(0) has three main subunits: a(1), b(2) and c(9-12). The alpha and beta chains form an alternating ring which encloses part of the gamma chain. CF(1) is attached to CF(0) by a central stalk formed by the gamma and epsilon chains, while a peripheral stalk is formed by the delta and b chains.

It is found in the cell membrane. The catalysed reaction is ATP + H2O + 4 H(+)(in) = ADP + phosphate + 5 H(+)(out). In terms of biological role, produces ATP from ADP in the presence of a proton gradient across the membrane. The catalytic sites are hosted primarily by the beta subunits. In Frankia casuarinae (strain DSM 45818 / CECT 9043 / HFP020203 / CcI3), this protein is ATP synthase subunit beta.